The following is a 758-amino-acid chain: 5-methyltetrahydropteroyltriglutamate--homocysteine methyltransferase (758 aa).

Residues 17 to 20 (RELK) and lysine 114 contribute to the 5-methyltetrahydropteroyltri-L-glutamate site. L-homocysteine contacts are provided by residues 429–431 (IGS) and glutamate 482. Residues 429-431 (IGS) and glutamate 482 each bind L-methionine. 5-methyltetrahydropteroyltri-L-glutamate contacts are provided by residues 513–514 (RC) and tryptophan 559. Residue aspartate 597 participates in L-homocysteine binding. Aspartate 597 contacts L-methionine. Residue glutamate 603 coordinates 5-methyltetrahydropteroyltri-L-glutamate. Positions 639, 641, and 663 each coordinate Zn(2+). The active-site Proton donor is the histidine 692. Cysteine 724 is a Zn(2+) binding site.

It belongs to the vitamin-B12 independent methionine synthase family. It depends on Zn(2+) as a cofactor.

It catalyses the reaction 5-methyltetrahydropteroyltri-L-glutamate + L-homocysteine = tetrahydropteroyltri-L-glutamate + L-methionine. It functions in the pathway amino-acid biosynthesis; L-methionine biosynthesis via de novo pathway; L-methionine from L-homocysteine (MetE route): step 1/1. Functionally, catalyzes the transfer of a methyl group from 5-methyltetrahydrofolate to homocysteine resulting in methionine formation. This chain is 5-methyltetrahydropteroyltriglutamate--homocysteine methyltransferase, found in Buchnera aphidicola subsp. Acyrthosiphon pisum (strain APS) (Acyrthosiphon pisum symbiotic bacterium).